Consider the following 730-residue polypeptide: MHVDSRGNAPVRRRRPAVACTECRRRKIRCDQATPCRHCEKAALRCIYNHLRPNTSQSKISPPTSASGFISGSQLSVNDSPQLPLSNDTKFHGFGSGSLKSDLSLEYVPSALPTSSSIFVEPNSLSSLSEPLAWEIAPPETGVGILAESDSPLNMQGQTGELRDQHTAPWMEILHCDPDEFWFDSEELRRMWRKTRDLELLLATSKMPSEWLYWSPGPTAPEASSLIPPRATCDVLLELQYWSSPDSMSDVFLCKLLLAMAIGTLFAPASPSAGQLTDMRPRALAWMHYGQQWLFRKIVLDAQLNLDILQTSPTSIGDRHFWLSEDCLVRMAMKLGLHRDPHIHNPAMLGTEVEVRRRLWVTLLELSLQASLDAKLPVPLPSDGGFDTELPSNLSDTDLGSIATLCNPNPRTFFTHSTMQILLAETQRIRIRILNLLYSPATSIPYQEALKLASELRRACNTNLRLLQSFTPQTPGAMMPTEFQTKILDLWTRRFLLALLTPYADEARSDYSLYYTRKARIDASSLLLSYPLSHSTATGPSPIGSYYLQLQISGQGIFRNVLKQATAAICQDLIQELVEDAFPVTDREPHAKLCQIIRDSISIYRTRMELSQPCMQEYVAFVCASAQIGALRSRCDNKHDFFPTAKKALGQCHHILESNHRSNSPEKYRAETMHVLDIDQGMNFWSDLLSTAGASPLSPPSSSSFFLEHGLSHTVPWEAPHSREVVDNER.

A DNA-binding region (zn(2)-C6 fungal-type) is located at residues 20 to 46 (CTECRRRKIRCDQATPCRHCEKAALRC).

It is found in the nucleus. Its function is as follows. Transcription factor involved in regulation of gene cluster that mediates the biosynthesis of aspyridones. This Emericella nidulans (strain FGSC A4 / ATCC 38163 / CBS 112.46 / NRRL 194 / M139) (Aspergillus nidulans) protein is Aspyridones cluster regulator apdR.